A 93-amino-acid chain; its full sequence is Zinc metalloproteinase-disintegrin-like leucurogin (93 aa).

The 86-residue stretch at 8–93 (PPVCGNELLE…SECPADVGHK (86 aa)) folds into the Disintegrin domain. Residues V10, N13, L15, E17, E20, and D23 each coordinate Ca(2+). 7 cysteine pairs are disulfide-bonded: C11–C40, C22–C35, C24–C30, C34–C57, C48–C54, C53–C79, and C66–C86. A D/ECD-tripeptide motif is present at residues 72–74 (ECD). Ca(2+) is bound by residues D74, P75, E77, D89, and V90. The interval 74 to 93 (DPAEHCTGQSSECPADVGHK) is disordered.

It belongs to the venom metalloproteinase (M12B) family. P-III subfamily. In terms of assembly, monomer. Zn(2+) serves as cofactor. In terms of processing, N-glycosylated. As to expression, expressed by the venom gland.

Its subcellular location is the secreted. In terms of biological role, snake venom zinc metalloprotease that possesses hemorrhagic activity. The disintegrin-like domain has been expressed and named leucurogin. This recombinant disintegrin is able to inhibit collagen-induced platelet aggregation but not ADP- or arachidonic acid-induced platelet aggregation. Furthermore, it inhibits the adhesion of human fibroblasts to collagen type I. It also reduces adhesion and migration of human fibroblasts and inhibits migration and proliferation of human and mouse melanoma cell lines (BLM, and B16-F10-Nex2). In vitro, it inhibits the vascular structures formation by endothelial cells. In addition, it inhibits the growth of experimental Ehrlich tumor and has anti-angiogenesis effect on the sponge implant model. In vivo, when intraperitoneally injected into mice, it inhibits lung metastasis of B16F10 Nex-2 cells. In the treatment of human melanoma, grafted intradermally in the nude mice flank, it inhibits tumor growth. This Bothrops leucurus (Whitetail lancehead) protein is Zinc metalloproteinase-disintegrin-like leucurogin.